The chain runs to 198 residues: Holliday junction branch migration complex subunit RuvA (198 aa).

Residues 1-63 (MYDYIKGQLT…EDAQLLFGFH (63 aa)) form a domain I region. The domain II stretch occupies residues 64–142 (SEEEKDVFLK…EAPKEESSKP (79 aa)). Residues 143–147 (PKAKQ) are flexible linker. The interval 148-198 (QGNEQLDEAVEALLALGYKATELKKIRAFFEGTSETAEQYIKSALKMLMKG) is domain III.

It belongs to the RuvA family. In terms of assembly, homotetramer. Forms an RuvA(8)-RuvB(12)-Holliday junction (HJ) complex. HJ DNA is sandwiched between 2 RuvA tetramers; dsDNA enters through RuvA and exits via RuvB. An RuvB hexamer assembles on each DNA strand where it exits the tetramer. Each RuvB hexamer is contacted by two RuvA subunits (via domain III) on 2 adjacent RuvB subunits; this complex drives branch migration. In the full resolvosome a probable DNA-RuvA(4)-RuvB(12)-RuvC(2) complex forms which resolves the HJ.

The protein localises to the cytoplasm. In terms of biological role, the RuvA-RuvB-RuvC complex processes Holliday junction (HJ) DNA during genetic recombination and DNA repair, while the RuvA-RuvB complex plays an important role in the rescue of blocked DNA replication forks via replication fork reversal (RFR). RuvA specifically binds to HJ cruciform DNA, conferring on it an open structure. The RuvB hexamer acts as an ATP-dependent pump, pulling dsDNA into and through the RuvAB complex. HJ branch migration allows RuvC to scan DNA until it finds its consensus sequence, where it cleaves and resolves the cruciform DNA. This chain is Holliday junction branch migration complex subunit RuvA, found in Streptococcus equi subsp. zooepidemicus (strain H70).